A 203-amino-acid chain; its full sequence is Holliday junction branch migration complex subunit RuvA (203 aa).

Residues 1–64 (MIGRLRGIIL…EDAQLLYGFN (64 aa)) are domain I. A domain II region spans residues 65–142 (NKQERTLFKE…KGLHGDLFTP (78 aa)). Positions 143 to 154 (AVDLVLTSPASP) are flexible linker. Residues 155 to 203 (TSEDAEQEAVAALVALGYKPQEASRMVNKIARPDASSETLIRDALRAAL) form a domain III region.

The protein belongs to the RuvA family. In terms of assembly, homotetramer. Forms an RuvA(8)-RuvB(12)-Holliday junction (HJ) complex. HJ DNA is sandwiched between 2 RuvA tetramers; dsDNA enters through RuvA and exits via RuvB. An RuvB hexamer assembles on each DNA strand where it exits the tetramer. Each RuvB hexamer is contacted by two RuvA subunits (via domain III) on 2 adjacent RuvB subunits; this complex drives branch migration. In the full resolvosome a probable DNA-RuvA(4)-RuvB(12)-RuvC(2) complex forms which resolves the HJ.

Its subcellular location is the cytoplasm. The RuvA-RuvB-RuvC complex processes Holliday junction (HJ) DNA during genetic recombination and DNA repair, while the RuvA-RuvB complex plays an important role in the rescue of blocked DNA replication forks via replication fork reversal (RFR). RuvA specifically binds to HJ cruciform DNA, conferring on it an open structure. The RuvB hexamer acts as an ATP-dependent pump, pulling dsDNA into and through the RuvAB complex. HJ branch migration allows RuvC to scan DNA until it finds its consensus sequence, where it cleaves and resolves the cruciform DNA. This chain is Holliday junction branch migration complex subunit RuvA, found in Salmonella choleraesuis (strain SC-B67).